The sequence spans 59 residues: Large ribosomal subunit protein bL32c (59 aa).

The disordered stretch occupies residues 36-59 (KSRSFSGVSEHPKPKGFSRQQTNK).

Belongs to the bacterial ribosomal protein bL32 family.

Its subcellular location is the plastid. It is found in the chloroplast. The protein is Large ribosomal subunit protein bL32c of Oryza nivara (Indian wild rice).